Here is a 396-residue protein sequence, read N- to C-terminus: Probable sugar efflux transporter (396 aa).

Over 1 to 14 (MTINPVSRKVAWLR) the chain is Cytoplasmic. The helical transmembrane segment at 15 to 35 (VVTLAIAAFIFNTTEFVPVGL) threads the bilayer. Topologically, residues 36–49 (LSDIAESFHMQTAQ) are periplasmic. The chain crosses the membrane as a helical span at residues 50–70 (VGIMLTIYAWVVAVMSLPFML). Residues 71-80 (LTSQMERRKL) lie on the Cytoplasmic side of the membrane. The helical transmembrane segment at 81 to 101 (LIYLFVLFIASHVLSFLAWNF) threads the bilayer. Position 102 (Thr102) is a topological domain, periplasmic. Residues 103–123 (VLVISRIGIAFAHAIFWSITA) form a helical membrane-spanning segment. The Cytoplasmic portion of the chain corresponds to 124-135 (SLAIRLAPAGKR). Residues 136-156 (AQALSLIATGTALAMVLGLPI) form a helical membrane-spanning segment. Over 157 to 168 (GRVVGQYFGWRT) the chain is Periplasmic. A helical membrane pass occupies residues 169–189 (TFFAIGMGALITLLCLIKLLP). The Cytoplasmic segment spans residues 190–208 (KLPSEHSGSLKSLPLLFRR). Residues 209–229 (PALMSLYVLTVVVVTAHYTAY) form a helical membrane-spanning segment. Residues 230–245 (SYIEPFVQNVAGLSAN) lie on the Periplasmic side of the membrane. The chain crosses the membrane as a helical span at residues 246-266 (FATVLLLILGGAGIIGSLVFG). Over 267 to 274 (KLGNRHAS) the chain is Cytoplasmic. Residues 275-295 (SLVSIAIALLVVCLLLLLPAA) traverse the membrane as a helical segment. Residues 296–300 (ESEAH) lie on the Periplasmic side of the membrane. A helical transmembrane segment spans residues 301–321 (LAILSIFWGIAIMVIGLGMQV). Residues 322–332 (KVLALAPDATD) are Cytoplasmic-facing. A helical membrane pass occupies residues 333-353 (VAMALFSGIFNIGIGAGALVG). The Periplasmic portion of the chain corresponds to 354 to 363 (NQVSLHWSMS). The helical transmembrane segment at 364 to 384 (AIGYIGAIPACAALVWAVLIF) threads the bilayer. Residues 385-396 (RKWPVTLEEQPH) are Cytoplasmic-facing.

This sequence belongs to the major facilitator superfamily. SotB (TC 2.A.1.2) family.

The protein resides in the cell inner membrane. Functionally, involved in the efflux of sugars. The physiological role may be the reduction of the intracellular concentration of toxic sugars or sugar metabolites. The sequence is that of Probable sugar efflux transporter from Salmonella typhimurium (strain LT2 / SGSC1412 / ATCC 700720).